A 458-amino-acid polypeptide reads, in one-letter code: Adenylosuccinate synthetase (458 aa).

Residues 17–23 and 45–47 contribute to the GTP site; these read GDEGKGK and GHT. Aspartate 18 (proton acceptor) is an active-site residue. Aspartate 18 and glycine 45 together coordinate Mg(2+). Residues 18–21, 43–46, threonine 137, arginine 151, glutamine 247, threonine 262, and arginine 330 each bind IMP; these read DEGK and NAGH. The active-site Proton donor is histidine 46. 326-332 is a substrate binding site; that stretch reads VTTGRSR. GTP-binding positions include arginine 332, 358 to 360, and 440 to 442; these read KLD and STS.

Belongs to the adenylosuccinate synthetase family. In terms of assembly, homodimer. Mg(2+) is required as a cofactor.

Its subcellular location is the cytoplasm. The enzyme catalyses IMP + L-aspartate + GTP = N(6)-(1,2-dicarboxyethyl)-AMP + GDP + phosphate + 2 H(+). It functions in the pathway purine metabolism; AMP biosynthesis via de novo pathway; AMP from IMP: step 1/2. In terms of biological role, plays an important role in the de novo pathway of purine nucleotide biosynthesis. Catalyzes the first committed step in the biosynthesis of AMP from IMP. This chain is Adenylosuccinate synthetase, found in Delftia acidovorans (strain DSM 14801 / SPH-1).